The chain runs to 241 residues: Mitochondrial inner membrane protease ATP23 (241 aa).

Histidine 141 contributes to the a divalent metal cation binding site. Residue glutamate 142 is part of the active site. Residue histidine 145 participates in a divalent metal cation binding.

This sequence belongs to the peptidase M76 family.

The protein localises to the mitochondrion inner membrane. In terms of biological role, has a dual role in the assembly of mitochondrial ATPase. Acts as a protease that removes N-terminal residues of mitochondrial ATPase CF(0) subunit 6 at the intermembrane space side. Also involved in the correct assembly of the membrane-embedded ATPase CF(0) particle, probably mediating association of subunit 6 with the subunit 9 ring. The protein is Mitochondrial inner membrane protease ATP23 (ATP23) of Lodderomyces elongisporus (strain ATCC 11503 / CBS 2605 / JCM 1781 / NBRC 1676 / NRRL YB-4239) (Yeast).